The chain runs to 540 residues: Membrane protein insertase YidC (540 aa).

Helical transmembrane passes span Leu7–Tyr27, Ile345–Tyr365, Leu415–Phe435, Leu453–Leu473, and Pro494–Val514.

Belongs to the OXA1/ALB3/YidC family. Type 1 subfamily. In terms of assembly, interacts with the Sec translocase complex via SecD. Specifically interacts with transmembrane segments of nascent integral membrane proteins during membrane integration.

It localises to the cell inner membrane. Functionally, required for the insertion and/or proper folding and/or complex formation of integral membrane proteins into the membrane. Involved in integration of membrane proteins that insert both dependently and independently of the Sec translocase complex, as well as at least some lipoproteins. Aids folding of multispanning membrane proteins. The polypeptide is Membrane protein insertase YidC (Mannheimia succiniciproducens (strain KCTC 0769BP / MBEL55E)).